Here is a 136-residue protein sequence, read N- to C-terminus: Invertebrate-type lysozyme (136 aa).

A signal peptide spans 1 to 11; it reads METVSVEEGLD. The 117-residue stretch at 14–130 folds into the I-type lysozyme domain; it reads PGMVSQKCLL…WELLQKIPGC (117 aa). 7 cysteine pairs are disulfide-bonded: Cys-21/Cys-98, Cys-24/Cys-130, Cys-26/Cys-33, Cys-38/Cys-47, Cys-60/Cys-80, Cys-70/Cys-76, and Cys-94/Cys-112. Glu-29 acts as the Proton donor in catalysis. The active-site Nucleophile is the Asp-41. 53–59 serves as a coordination point for substrate; sequence KQPYWID. Asn-75 is a glycosylation site (N-linked (GlcNAc...) asparagine). Residues Tyr-84, Tyr-92, 105–107, and Lys-119 contribute to the substrate site; that span reads HNG.

In terms of assembly, homodimer in its autoinhibited state. Active as monomer.

Its subcellular location is the secreted. It catalyses the reaction Hydrolysis of (1-&gt;4)-beta-linkages between N-acetylmuramic acid and N-acetyl-D-glucosamine residues in a peptidoglycan and between N-acetyl-D-glucosamine residues in chitodextrins.. Chitinase activity is activated by high salt concentrations which cause the release of the monomer from the autoinhibited homodimer. Its function is as follows. Bacteriolytic activity against Gram-positive bacterium M.luteus and thereby probably protects against bacterial infection. Also has chitinase activity. May act as an ispopeptidase, cleaving isopeptide bonds between the side chains of Lys and Gln residues in proteins or in the cross-linking peptide of peptidoglycan in bacterial cell walls. The chain is Invertebrate-type lysozyme from Ruditapes philippinarum (Japanese carpet shell).